A 388-amino-acid polypeptide reads, in one-letter code: Dual-specificity RNA methyltransferase RlmN (388 aa).

The Proton acceptor role is filled by glutamate 109. Positions glutamate 115–aspartate 354 constitute a Radical SAM core domain. Cysteine 122 and cysteine 359 form a disulfide bridge. [4Fe-4S] cluster contacts are provided by cysteine 129, cysteine 133, and cysteine 136. Residues glycine 183–glutamate 184, serine 215, serine 237–histidine 239, and asparagine 316 contribute to the S-adenosyl-L-methionine site. Catalysis depends on cysteine 359, which acts as the S-methylcysteine intermediate.

The protein belongs to the radical SAM superfamily. RlmN family. [4Fe-4S] cluster serves as cofactor.

Its subcellular location is the cytoplasm. It catalyses the reaction adenosine(2503) in 23S rRNA + 2 reduced [2Fe-2S]-[ferredoxin] + 2 S-adenosyl-L-methionine = 2-methyladenosine(2503) in 23S rRNA + 5'-deoxyadenosine + L-methionine + 2 oxidized [2Fe-2S]-[ferredoxin] + S-adenosyl-L-homocysteine. The enzyme catalyses adenosine(37) in tRNA + 2 reduced [2Fe-2S]-[ferredoxin] + 2 S-adenosyl-L-methionine = 2-methyladenosine(37) in tRNA + 5'-deoxyadenosine + L-methionine + 2 oxidized [2Fe-2S]-[ferredoxin] + S-adenosyl-L-homocysteine. Specifically methylates position 2 of adenine 2503 in 23S rRNA and position 2 of adenine 37 in tRNAs. m2A2503 modification seems to play a crucial role in the proofreading step occurring at the peptidyl transferase center and thus would serve to optimize ribosomal fidelity. The polypeptide is Dual-specificity RNA methyltransferase RlmN (Enterobacter sp. (strain 638)).